A 628-amino-acid chain; its full sequence is Kelch-like protein diablo (628 aa).

The segment at 1–56 (MGDLPGSTGGGSGPAAAGNASGNSSSAGNTGLGVAGTTGVDRPPSPARLSHTSEKH) is disordered. The span at 14–29 (PAAAGNASGNSSSAGN) shows a compositional bias: low complexity. In terms of domain architecture, BTB spans 74–141 (CDVVLNVGGR…CYTAHIIVEE (68 aa)). One can recognise a BACK domain in the interval 176-278 (CLGIRAFADT…SPKFLVGTVG (103 aa)). 6 Kelch repeats span residues 325–371 (VLFA…VLND), 373–419 (LYAV…VLDG), 420–466 (FLYA…VLGG), 468–513 (LYAI…VFNN), 515–560 (IYAV…VVNG), and 561–607 (QLYA…VMRA).

It functions in the pathway protein modification; protein ubiquitination. Functionally, probable substrate-specific adapter of an E3 ubiquitin-protein ligase complex which mediates the ubiquitination and subsequent proteasomal degradation of target proteins. May have a role in synapse differentiation and growth. This is Kelch-like protein diablo from Drosophila persimilis (Fruit fly).